We begin with the raw amino-acid sequence, 1006 residues long: Phosphatidylinositol-3,5-bisphosphate 3-phosphatase MTMR3 (1006 aa).

Residues 1–10 (MTVTSSAAID) show a composition bias toward low complexity. The interval 1–29 (MTVTSSAAIDIGGGGGGRRSDRLDSDRTS) is disordered. Residues 18-29 (RRSDRLDSDRTS) are compositionally biased toward basic and acidic residues. A Myotubularin phosphatase domain is found at 224–630 (AWKFSEAVDE…INLRVWHEVF (407 aa)). Residues Asn377, Asn402, and Ile403 each coordinate a 1,2-diacyl-sn-glycero-3-phospho-(1D-myo-inositol-3,5-bisphosphate). Residues Asn377, Asn402, and Ile403 each contribute to the a 1,2-diacyl-sn-glycero-3-phospho-(1D-myo-inositol-3-phosphate) site. Cys463 (phosphocysteine intermediate) is an active-site residue. A 1,2-diacyl-sn-glycero-3-phospho-(1D-myo-inositol-3,5-bisphosphate) is bound by residues Ser464, Asp465, Gly466, Trp467, Asp468, Arg469, Lys505, and Arg509. Residues Ser464, Asp465, Gly466, Trp467, Asp468, and Arg469 each coordinate a 1,2-diacyl-sn-glycero-3-phospho-(1D-myo-inositol-3-phosphate). Arg509 serves as a coordination point for a 1,2-diacyl-sn-glycero-3-phospho-(1D-myo-inositol-3-phosphate). The interval 641–705 (FSPKEERPLS…PSDNTNSLPM (65 aa)) is disordered. Positions 651-705 (GCTTPMNTSTSTNLVKSKSSESINSLNVDGSAKESSQQHPTCSTTPSDNTNSLPM) are enriched in polar residues. An FYVE-type zinc finger spans residues 818–883 (EGESGHCAYC…ACDSCYDSMH (66 aa)). Zn(2+)-binding residues include Cys824, Cys827, Cys845, Cys848, Cys853, Cys856, Cys875, and Cys878. A disordered region spans residues 886-1006 (DLKLSSSSTT…DVLDVNEQPL (121 aa)). Composition is skewed to low complexity over residues 890–901 (SSSSTTTTSSST) and 913–926 (DNNS…VSEN). 2 stretches are compositionally biased toward basic and acidic residues: residues 933 to 954 (VEEK…ETKC) and 976 to 985 (HSRDPLKSID).

It belongs to the protein-tyrosine phosphatase family. Non-receptor class myotubularin subfamily. In terms of tissue distribution, expressed in the body wall muscle and in eggs. Expressed in head neurons. Expressed in the intestine. Expressed in pharyngeal cells, vulval muscle cells and cells of the tail region.

Its subcellular location is the cytoplasm. It is found in the membrane. The enzyme catalyses a 1,2-diacyl-sn-glycero-3-phospho-(1D-myo-inositol-3,5-bisphosphate) + H2O = a 1,2-diacyl-sn-glycero-3-phospho-(1D-myo-inositol-5-phosphate) + phosphate. It catalyses the reaction a 1,2-diacyl-sn-glycero-3-phospho-(1D-myo-inositol-3-phosphate) + H2O = a 1,2-diacyl-sn-glycero-3-phospho-(1D-myo-inositol) + phosphate. It carries out the reaction 1,2-dihexadecanoyl-sn-glycero-3-phospho-(1D-myo-inositol-3-phosphate) + H2O = 1,2-dihexadecanoyl-sn-glycero-3-phospho-(1D-myo-inositol) + phosphate. The catalysed reaction is 1,2-dihexadecanoyl-sn-glycero-3-phospho-(1D-myo-inositol-3,5-phosphate) + H2O = 1,2-dihexadecanoyl-sn-glycero-3-phospho-(1D-myo-inositol-5-phosphate) + phosphate. The enzyme catalyses 1,2-dioctanoyl-sn-glycero-3-phospho-(1-D-myo-inositol-3-phosphate) + H2O = 1,2-dioctanoyl-sn-glycero-3-phospho-(1D-myo-inositol) + phosphate. Its activity is regulated as follows. Inhibited by sodium vanadate and peroxide. Its function is as follows. Preferentially dephosphorylates phosphatidylinositol 3-phosphate (PI3P), and has some activity towards phosphatidylinositol 3,5-bisphosphate (PI35P). Positively regulates autophagy and is recruited to autophagosomes by PI3P where it catalyzes PI3P turnover to promote autophagosome maturation. Thought to have a role in maintenance of muscle function. Involved in locomotion and lifespan determination. The chain is Phosphatidylinositol-3,5-bisphosphate 3-phosphatase MTMR3 from Caenorhabditis elegans.